An 836-amino-acid chain; its full sequence is Probable RING finger protein 207 homolog (836 aa).

Residues 8–42 (CTICKNDFEEPILFSCQHTTCRKCSNGSPSCKTCS) form an RING-type zinc finger. The B box-type 1; atypical zinc-finger motif lies at 68–115 (EEMEQCANCEQITLPMFYCETCQQSLCLACRNVTHQARMFSSHKIISS). Residues Cys-73, Cys-76, Cys-97, and His-102 each coordinate Zn(2+). The segment at 122 to 164 (YSSSLCKDHNEPYILYCSDVRKLVCIQCFNGRPLEERHSFISI) adopts a B box-type 2; degenerate zinc-finger fold. Residues 527 to 557 (QNRIMAIEKEEENRRLNQEAKKKEELAGQSA) adopt a coiled-coil conformation. Positions 540-552 (RRLNQEAKKKEEL) are enriched in basic and acidic residues. Residues 540-571 (RRLNQEAKKKEELAGQSAAMKSLKHGKTKRKE) are disordered. Basic residues predominate over residues 561 to 571 (SLKHGKTKRKE).

In Caenorhabditis briggsae, this protein is Probable RING finger protein 207 homolog.